Consider the following 353-residue polypeptide: uncharacterized protein (353 aa).

Zn(2+) contacts are provided by Cys-40, His-70, Cys-100, Cys-103, Cys-106, Cys-114, and Cys-158.

The protein belongs to the zinc-containing alcohol dehydrogenase family. Zn(2+) serves as cofactor.

This is an uncharacterized protein from Escherichia coli (strain K12).